The chain runs to 595 residues: MNVQPRNMNVQPRNMNVQPVRHKLFFSDTDEEEEDGHSTGEDSAFQESDSPVSRQREKQEGKPPGGTWEELEEEEGFGSSPIKSPGDFFMSDSPSYRQLAPASPTRSPQGPTSPIPECPGTPPHKTFRKLRLFDTPHTPKSLLSKARGIGSSALRFRGGTLFREAEKAPKPEFVYSTPQVNINPFTPDSLEIQSSAGLCRGRKRALLNDSCGEDMEGSDCELEDEDIRPAKRIPITESNMKSRYATEFHELEKIGSGEFGSVFKCVKRLDGCIYAIKRSKKPLAGSVDEQNALREVYAHAVLGQHPHVVRYYSAWAEDDHMLIQNEYCNGGSLSDVISENYRTMQYFTEPELKDLLLQVARGLKYIHSMSLVHMDIKPSNIFISRTTLPNTAVEEADDEECGSGKVIYKIGDLGHVTRVSSPQVEEGDSRFLANEVLQENYTHLAKADIFALALTVWSAAGAEPFPTNGDQWHEIRQGKLPRVPQLLSQEFVDLIKLMISPDPEKRPSSVALVKHSVLLSASRKSAEQLRIELDAEKFKNALLQKELKKAQIAKAAAEERAHFPDRIATRSTTQNNRTTRLIGKKMNRSVSLTIY.

Residues Met1–Val17 are compositionally biased toward polar residues. The tract at residues Met1–Phe127 is disordered. Residues Pro111 to Pro122 are compositionally biased toward pro residues. Thr186 carries the post-translational modification Phosphothreonine; by cdk1. The region spanning Phe248 to Leu518 is the Protein kinase domain. ATP contacts are provided by residues Ile254 to Val262 and Lys277. Asp375 acts as the Proton acceptor in catalysis. Mg(2+)-binding residues include Asn380 and Asp412. A coiled-coil region spans residues Ala526–Phe563.

Belongs to the protein kinase superfamily. Ser/Thr protein kinase family. WEE1 subfamily. As to quaternary structure, interacts (when phosphorylated at Thr-186) with pin1. Phosphorylation at Thr-186 during M-phase by cdk1 inhibits the kinase activity and leads to interaction with pin1. As to expression, zygotically expressed. Present in oocytes and postgastrula embryos (at least until the tailbud stage). Expression begins at the midblastula stage and increases after the early gastrula stage.

It localises to the nucleus. The enzyme catalyses L-tyrosyl-[protein] + ATP = O-phospho-L-tyrosyl-[protein] + ADP + H(+). Its function is as follows. Acts as a zygotic negative regulator of entry into mitosis (G2 to M transition) by protecting the nucleus from cytoplasmically activated cyclin B1-complexed cdk1 before the onset of mitosis by mediating phosphorylation of cdk1 on 'Tyr-15'. Specifically phosphorylates and inactivates cyclin B1-complexed cdk1 reaching a maximum during G2 phase and a minimum as cells enter M phase. Phosphorylation of cyclin B1-cdk1 occurs exclusively on 'Tyr-15' and phosphorylation of monomeric cdk1 does not occur. This Xenopus laevis (African clawed frog) protein is Wee1-like protein kinase 1-B (wee1-b).